Reading from the N-terminus, the 263-residue chain is MAKVFAIANQKGGVGKTTTCINLAASLAATKRRVLLIDLDPQGNATMGSGVDKHELEHSVYDLLIGECDLAQAMHYSEHGGFQLLPANRDLTAAEVVLLEMQVKESRLRNALAPIRDNYDYILIDCPPSLSMLTLNALVASDGVIIPMQCEYYALEGLSDLVDNIKRIAARLNPELKIEGLLRTMYDPRLSLNNDVSAQLKEHFGPQLYDTVIPRNIRLAEAPSFGMPALAYDKQSRGALAYLALAGELVRRQRRPSRTAQTT.

To B.subtilis soj.

This is an uncharacterized protein from Pseudomonas putida (strain ATCC 47054 / DSM 6125 / CFBP 8728 / NCIMB 11950 / KT2440).